We begin with the raw amino-acid sequence, 389 residues long: Chalcone synthase 4-2 (389 aa).

Residue C164 is part of the active site.

Belongs to the thiolase-like superfamily. Chalcone/stilbene synthases family.

It catalyses the reaction (E)-4-coumaroyl-CoA + 3 malonyl-CoA + 3 H(+) = 2',4,4',6'-tetrahydroxychalcone + 3 CO2 + 4 CoA. It participates in secondary metabolite biosynthesis; flavonoid biosynthesis. Its function is as follows. The primary product of this enzyme is 4,2',4',6'-tetrahydroxychalcone (also termed naringenin-chalcone or chalcone) which can under specific conditions spontaneously isomerize into naringenin. The sequence is that of Chalcone synthase 4-2 (CHS4-2) from Medicago sativa (Alfalfa).